The following is a 231-amino-acid chain: MKLPQPLFQGTLIRRYQRFLADVELDDGTVVTAHTPNTGSMMGCACPGNRVLLSKSASLTRKYPHSWELVQADGTWVGINTQLPNLLAREAILDGTISELSGYQQIRGEVPYGSGSRIDLLLSGEQGLCYVETKNVTLVEDGVALFPDAVSARGQKHLRELMEMVRQGHRAVNLFIVQRADGAALAPADAIDPVYGRLLREAAQNGVEILAYRAEVTRTEVRLERALPVLL.

It belongs to the SfsA family.

The sequence is that of Sugar fermentation stimulation protein homolog from Citrifermentans bemidjiense (strain ATCC BAA-1014 / DSM 16622 / JCM 12645 / Bem) (Geobacter bemidjiensis).